The sequence spans 634 residues: Sodium-dependent neutral amino acid transporter B(0)AT1 (634 aa).

At 1–41 (MVRLVLPNPGLDTRILSLAELETIEQEEASSRPKWDNKAQY) the chain is on the cytoplasmic side. At Ser-17 the chain carries Phosphoserine. A helical membrane pass occupies residues 42-62 (LLTCVGFCVGLGNVWRFPYLC). The Extracellular segment spans residues 63–65 (QSH). The chain crosses the membrane as a helical span at residues 66–86 (GGGAFMIPFLILLVLEGIPLL). At 87-120 (HLEFAIGQRLRRGSLGVWSSIHPALKGVGLTSML) the chain is on the cytoplasmic side. The helical transmembrane segment at 121 to 141 (VSFVVGLYYNTIISWIMWYLF) threads the bilayer. At 142 to 192 (NSFQEPLPWSECPLNENQTGYVDECARSSPVDYFWYRETLNISTSISDSGS) the chain is on the extracellular side. N-linked (GlcNAc...) asparagine glycosylation is found at Asn-158 and Asn-182. The chain crosses the membrane as a helical span at residues 193-213 (IQWRMLLCLACAWSVLYMCTI). Residues 214–221 (RGIETTGK) lie on the Cytoplasmic side of the membrane. The helical transmembrane segment at 222–242 (VVYITSTLPYVVLTIFLIRGL) threads the bilayer. The Extracellular segment spans residues 243 to 268 (TLKGATKGIIYLFTPNVTELANPVTW). A glycan (N-linked (GlcNAc...) asparagine) is linked at Asn-258. Residues 269–289 (LDAGAQVFFSFSLAFGGLISF) form a helical membrane-spanning segment. The Cytoplasmic segment spans residues 290-304 (SSYNSVHNNCERDSV). The helical transmembrane segment at 305-325 (IVSIINGFTSVYVAIVIYSII) threads the bilayer. Residues 326–413 (GFRATQRYDD…TEAITKMPVS (88 aa)) are Extracellular-facing. Residues Asn-354 and Asn-368 are each glycosylated (N-linked (GlcNAc...) asparagine). The chain crosses the membrane as a helical span at residues 414–434 (PLWSVLFFIMLFCLGLSSMFG). Over 435-456 (NMEGVVVPLQDLKVIPPKWPKE) the chain is Cytoplasmic. The helical transmembrane segment at 457-477 (LLTGLICLGTFLIGFIFTLNS) threads the bilayer. Residues 478–487 (GQYWLSLLDS) lie on the Extracellular side of the membrane. Residues 488 to 508 (YAVSIPLLIIAFCEMFSVVYV) form a helical membrane-spanning segment. The Cytoplasmic portion of the chain corresponds to 509–531 (YGVDRFNKDIEFMIGHKPNIFWQ). A helical membrane pass occupies residues 532 to 552 (VTWRVVSPLLMLIILVFFFVV). Residues 553 to 581 (QVSQELTYSIWNPGYEEFPKSQKISHPNW) lie on the Extracellular side of the membrane. Residues 582–602 (VYAVVVIVAGVPSLTIPSYAI) form a helical membrane-spanning segment. Topologically, residues 603-634 (YKLIRNCCQKPGDRQGLVSTLSTASMNGDLKY) are cytoplasmic. The residue at position 627 (Ser-627) is a Phosphoserine.

The protein belongs to the sodium:neurotransmitter symporter (SNF) (TC 2.A.22) family. SLC6A19 subfamily. As to quaternary structure, interacts in a tissue-specific manner with ACE2 in small intestine and with CLTRN in the kidney. Interacts with CLTRN; this interaction is required for trafficking of SLC6A19 to the plasma membrane and for its catalytic activation in kidneys. Interacts with ACE2; this interaction is required for trafficking of SLC6A19 to the plasma membrane and for its catalytic activation in intestine. Interacts with ANPEP; the interaction positively regulates its amino acid transporter activity.

It is found in the membrane. The enzyme catalyses L-alanine(in) + Na(+)(in) = L-alanine(out) + Na(+)(out). The catalysed reaction is L-cysteine(in) + Na(+)(in) = L-cysteine(out) + Na(+)(out). It catalyses the reaction L-glutamine(in) + Na(+)(in) = L-glutamine(out) + Na(+)(out). It carries out the reaction glycine(in) + Na(+)(in) = glycine(out) + Na(+)(out). The enzyme catalyses L-isoleucine(in) + Na(+)(in) = L-isoleucine(out) + Na(+)(out). The catalysed reaction is L-leucine(in) + Na(+)(in) = L-leucine(out) + Na(+)(out). It catalyses the reaction L-methionine(in) + Na(+)(in) = L-methionine(out) + Na(+)(out). It carries out the reaction L-phenylalanine(in) + Na(+)(in) = L-phenylalanine(out) + Na(+)(out). The enzyme catalyses L-serine(in) + Na(+)(in) = L-serine(out) + Na(+)(out). The catalysed reaction is L-tryptophan(in) + Na(+)(in) = L-tryptophan(out) + Na(+)(out). It catalyses the reaction L-tyrosine(in) + Na(+)(in) = L-tyrosine(out) + Na(+)(out). It carries out the reaction L-valine(in) + Na(+)(in) = L-valine(out) + Na(+)(out). Its function is as follows. Transporter that mediates resorption of neutral amino acids across the apical membrane of renal and intestinal epithelial cells. This uptake is sodium-dependent and chloride-independent. Requires CLTRN in kidney or ACE2 in intestine for cell surface expression and amino acid transporter activity. The protein is Sodium-dependent neutral amino acid transporter B(0)AT1 (SLC6A19) of Pongo abelii (Sumatran orangutan).